The chain runs to 248 residues: 2,3-bisphosphoglycerate-dependent phosphoglycerate mutase (248 aa).

Substrate-binding positions include 8–15 (RHGESTWN), 21–22 (TG), Arg60, 87–90 (ERHY), Lys98, 114–115 (RR), and 183–184 (GN). The active-site Tele-phosphohistidine intermediate is His9. The active-site Proton donor/acceptor is the Glu87.

Belongs to the phosphoglycerate mutase family. BPG-dependent PGAM subfamily. As to quaternary structure, homodimer.

It carries out the reaction (2R)-2-phosphoglycerate = (2R)-3-phosphoglycerate. It functions in the pathway carbohydrate degradation; glycolysis; pyruvate from D-glyceraldehyde 3-phosphate: step 3/5. Its function is as follows. Catalyzes the interconversion of 2-phosphoglycerate and 3-phosphoglycerate. The protein is 2,3-bisphosphoglycerate-dependent phosphoglycerate mutase of Cupriavidus pinatubonensis (strain JMP 134 / LMG 1197) (Cupriavidus necator (strain JMP 134)).